Reading from the N-terminus, the 297-residue chain is Probable ABC transporter phosphite binding protein PhnD1 (297 aa).

The first 24 residues, 1 to 24 (MFNLKYFLVSSSLLFSVFSSPVFS), serve as a signal peptide directing secretion.

It belongs to the phosphate/phosphite/phosphonate binding protein family. As to quaternary structure, the complex may be composed of two ATP-binding proteins (PhnC1), two transmembrane proteins (PhnE1) and a solute-binding protein (PhnD1).

Its subcellular location is the periplasm. Its function is as follows. Probably part of the ABC transporter complex PhnD1C1E1. Binds strongly to inorganic phosphite and with very weak affinities to methylphosphonate (MPn) and phosphate. This Prochlorococcus marinus (strain MIT 9301) protein is Probable ABC transporter phosphite binding protein PhnD1.